The following is a 598-amino-acid chain: Aspartate--tRNA(Asp/Asn) ligase (598 aa).

Residue glutamate 174 coordinates L-aspartate. Residues 198–201 (QQLK) are aspartate. Residue arginine 220 coordinates L-aspartate. Residues 220-222 (RDE) and glutamine 229 each bind ATP. Residue histidine 458 coordinates L-aspartate. Residue glutamate 492 coordinates ATP. L-aspartate is bound at residue arginine 499. Position 544 to 547 (544 to 547 (GIDR)) interacts with ATP.

It belongs to the class-II aminoacyl-tRNA synthetase family. Type 1 subfamily. In terms of assembly, homodimer.

It localises to the cytoplasm. The enzyme catalyses tRNA(Asx) + L-aspartate + ATP = L-aspartyl-tRNA(Asx) + AMP + diphosphate. In terms of biological role, aspartyl-tRNA synthetase with relaxed tRNA specificity since it is able to aspartylate not only its cognate tRNA(Asp) but also tRNA(Asn). Reaction proceeds in two steps: L-aspartate is first activated by ATP to form Asp-AMP and then transferred to the acceptor end of tRNA(Asp/Asn). This is Aspartate--tRNA(Asp/Asn) ligase from Dehalococcoides mccartyi (strain ATCC BAA-2100 / JCM 16839 / KCTC 5957 / BAV1).